An 88-amino-acid polypeptide reads, in one-letter code: Small ribosomal subunit protein uS19 (88 aa).

The protein belongs to the universal ribosomal protein uS19 family.

Protein S19 forms a complex with S13 that binds strongly to the 16S ribosomal RNA. This chain is Small ribosomal subunit protein uS19, found in Carsonella ruddii (strain PV).